Reading from the N-terminus, the 483-residue chain is Glutamate--tRNA ligase (483 aa).

Residues 11–21 (PSPTGLLHIGN) carry the 'HIGH' region motif. The short motif at 255–259 (KLSKR) is the 'KMSKS' region element. ATP is bound at residue K258.

It belongs to the class-I aminoacyl-tRNA synthetase family. Glutamate--tRNA ligase type 1 subfamily. As to quaternary structure, monomer.

It is found in the cytoplasm. It carries out the reaction tRNA(Glu) + L-glutamate + ATP = L-glutamyl-tRNA(Glu) + AMP + diphosphate. Its function is as follows. Catalyzes the attachment of glutamate to tRNA(Glu) in a two-step reaction: glutamate is first activated by ATP to form Glu-AMP and then transferred to the acceptor end of tRNA(Glu). The protein is Glutamate--tRNA ligase of Lactococcus lactis subsp. lactis (strain IL1403) (Streptococcus lactis).